An 874-amino-acid polypeptide reads, in one-letter code: Alanine--tRNA ligase (874 aa).

4 residues coordinate Zn(2+): His-562, His-566, Cys-665, and His-669.

This sequence belongs to the class-II aminoacyl-tRNA synthetase family. The cofactor is Zn(2+).

It localises to the cytoplasm. It carries out the reaction tRNA(Ala) + L-alanine + ATP = L-alanyl-tRNA(Ala) + AMP + diphosphate. Its function is as follows. Catalyzes the attachment of alanine to tRNA(Ala) in a two-step reaction: alanine is first activated by ATP to form Ala-AMP and then transferred to the acceptor end of tRNA(Ala). Also edits incorrectly charged Ser-tRNA(Ala) and Gly-tRNA(Ala) via its editing domain. This Pseudomonas entomophila (strain L48) protein is Alanine--tRNA ligase.